A 418-amino-acid chain; its full sequence is Cell division protein FtsZ (418 aa).

GTP contacts are provided by residues 27–31 (GGGSN), 114–116 (GTG), glutamate 145, lysine 149, and aspartate 193. The tract at residues 386–418 (KNGVKGHTFGVPLPSVNEDLDEPTFLRNRNKGL) is disordered.

It belongs to the FtsZ family. Homodimer. Polymerizes to form a dynamic ring structure in a strictly GTP-dependent manner. Interacts directly with several other division proteins.

The protein resides in the cytoplasm. Functionally, essential cell division protein that forms a contractile ring structure (Z ring) at the future cell division site. The regulation of the ring assembly controls the timing and the location of cell division. One of the functions of the FtsZ ring is to recruit other cell division proteins to the septum to produce a new cell wall between the dividing cells. Binds GTP and shows GTPase activity. The chain is Cell division protein FtsZ from Treponema pallidum (strain Nichols).